Consider the following 762-residue polypeptide: cGMP-dependent protein kinase 2 (762 aa).

Positions 1-26 (MGNGSVKPKHAKHPDGHSGNLSNEAL) are disordered. Glycine 2 is lipidated: N-myristoyl glycine. Residues serine 110 and serine 117 each carry the phosphoserine modification. Residues 118 to 138 (RRGAKAGVSAEPTTRTYDLNK) form a disordered region. Positions 168-283 (FLKRLDPQQI…DEEYRNFLRS (116 aa)) are cGMP-binding, high affinity; cAMP-binding, moderate affinity. Residues 232 to 235 (GELA), 242 to 243 (RT), lysine 347, 356 to 359 (GEKA), 366 to 367 (RS), aspartate 412, and arginine 415 each bind 3',5'-cyclic GMP. The cGMP-binding, high affinity; cAMP-binding, low affinity stretch occupies residues 286 to 416 (LLKNLPEDKL…TLNRDDEKRH (131 aa)). The residue at position 431 (serine 431) is a Phosphoserine. Residues 453–711 (LEIIATLGVG…INDIKKHRWL (259 aa)) form the Protein kinase domain. ATP-binding positions include 459–467 (LGVGGFGRV) and lysine 482. Aspartate 576 acts as the Proton acceptor in catalysis. At threonine 609 the chain carries Phosphothreonine. Positions 712–762 (NGFNWEGLKARSLPSPLRRELSGPIDHSYFDKYPPEKGVPPDEMSGWDKDF) constitute an AGC-kinase C-terminal domain. Residues 740–762 (YFDKYPPEKGVPPDEMSGWDKDF) are disordered.

This sequence belongs to the protein kinase superfamily. AGC Ser/Thr protein kinase family. cGMP subfamily. As to quaternary structure, interacts with GRIA1/GLUR1. Myristoylation mediates membrane localization.

Its subcellular location is the apical cell membrane. It is found in the cell membrane. The enzyme catalyses L-seryl-[protein] + ATP = O-phospho-L-seryl-[protein] + ADP + H(+). It carries out the reaction L-threonyl-[protein] + ATP = O-phospho-L-threonyl-[protein] + ADP + H(+). Binding of cGMP results in enzyme activation. In terms of biological role, crucial regulator of intestinal secretion and bone growth. Phosphorylates and activates CFTR on the plasma membrane. Plays a key role in intestinal secretion by regulating cGMP-dependent translocation of CFTR in jejunum. Acts downstream of NMDAR to activate the plasma membrane accumulation of GRIA1/GLUR1 in synapse and increase synaptic plasticity. Phosphorylates GRIA1/GLUR1 at Ser-863. Acts as a regulator of gene expression and activator of the extracellular signal-regulated kinases MAPK3/ERK1 and MAPK1/ERK2 in mechanically stimulated osteoblasts. Under fluid shear stress, mediates ERK activation and subsequent induction of FOS, FOSL1/FRA1, FOSL2/FRA2 and FOSB that play a key role in the osteoblast anabolic response to mechanical stimulation. The sequence is that of cGMP-dependent protein kinase 2 (Prkg2) from Mus musculus (Mouse).